The following is a 122-amino-acid chain: Dihydroneopterin aldolase (122 aa).

Substrate-binding positions include glutamate 21, tyrosine 53, and 72 to 73 (VE). Lysine 98 acts as the Proton donor/acceptor in catalysis.

It belongs to the DHNA family. Homooctamer.

It carries out the reaction 7,8-dihydroneopterin = 6-hydroxymethyl-7,8-dihydropterin + glycolaldehyde. It catalyses the reaction 7,8-dihydroneopterin = 7,8-dihydromonapterin. It functions in the pathway cofactor biosynthesis; tetrahydrofolate biosynthesis; 2-amino-4-hydroxy-6-hydroxymethyl-7,8-dihydropteridine diphosphate from 7,8-dihydroneopterin triphosphate: step 3/4. Its function is as follows. Catalyzes the conversion of 7,8-dihydroneopterin to 6-hydroxymethyl-7,8-dihydropterin. Can use L-threo-dihydroneopterin and D-erythro-dihydroneopterin as substrates for the formation of 6-hydroxymethyldihydropterin, but it can also catalyze the epimerization of carbon 2' of dihydroneopterin to dihydromonapterin at appreciable velocity. This chain is Dihydroneopterin aldolase (folB), found in Escherichia coli O6:H1 (strain CFT073 / ATCC 700928 / UPEC).